The chain runs to 277 residues: 4-deoxy-L-threo-5-hexosulose-uronate ketol-isomerase (277 aa).

The Zn(2+) site is built by H195, H197, E202, and H244.

This sequence belongs to the KduI family. Zn(2+) serves as cofactor.

The catalysed reaction is 5-dehydro-4-deoxy-D-glucuronate = 3-deoxy-D-glycero-2,5-hexodiulosonate. Its pathway is glycan metabolism; pectin degradation; 2-dehydro-3-deoxy-D-gluconate from pectin: step 4/5. Catalyzes the isomerization of 5-dehydro-4-deoxy-D-glucuronate to 3-deoxy-D-glycero-2,5-hexodiulosonate. This Oceanobacillus iheyensis (strain DSM 14371 / CIP 107618 / JCM 11309 / KCTC 3954 / HTE831) protein is 4-deoxy-L-threo-5-hexosulose-uronate ketol-isomerase.